Consider the following 360-residue polypeptide: UDP-N-acetylglucosamine--N-acetylmuramyl-(pentapeptide) pyrophosphoryl-undecaprenol N-acetylglucosamine transferase (360 aa).

Residues 12–14 (TAG), Ser-198, and Gln-289 each bind UDP-N-acetyl-alpha-D-glucosamine.

This sequence belongs to the glycosyltransferase 28 family. MurG subfamily.

Its subcellular location is the cell membrane. It carries out the reaction Mur2Ac(oyl-L-Ala-gamma-D-Glu-L-Lys-D-Ala-D-Ala)-di-trans,octa-cis-undecaprenyl diphosphate + UDP-N-acetyl-alpha-D-glucosamine = beta-D-GlcNAc-(1-&gt;4)-Mur2Ac(oyl-L-Ala-gamma-D-Glu-L-Lys-D-Ala-D-Ala)-di-trans,octa-cis-undecaprenyl diphosphate + UDP + H(+). Its pathway is cell wall biogenesis; peptidoglycan biosynthesis. Cell wall formation. Catalyzes the transfer of a GlcNAc subunit on undecaprenyl-pyrophosphoryl-MurNAc-pentapeptide (lipid intermediate I) to form undecaprenyl-pyrophosphoryl-MurNAc-(pentapeptide)GlcNAc (lipid intermediate II). This Streptococcus equi subsp. zooepidemicus (strain H70) protein is UDP-N-acetylglucosamine--N-acetylmuramyl-(pentapeptide) pyrophosphoryl-undecaprenol N-acetylglucosamine transferase.